The chain runs to 132 residues: Large ribosomal subunit protein uL22c (132 aa).

The protein belongs to the universal ribosomal protein uL22 family. As to quaternary structure, part of the 50S ribosomal subunit.

The protein resides in the plastid. It localises to the chloroplast. In terms of biological role, this protein binds specifically to 23S rRNA. The globular domain of the protein is located near the polypeptide exit tunnel on the outside of the subunit, while an extended beta-hairpin is found that lines the wall of the exit tunnel in the center of the 70S ribosome. This chain is Large ribosomal subunit protein uL22c (rpl22), found in Populus trichocarpa (Western balsam poplar).